A 136-amino-acid chain; its full sequence is Snaclec rhodocytin subunit alpha (136 aa).

3 disulfides stabilise this stretch: Cys5–Cys16, Cys33–Cys131, and Cys106–Cys123. Residues 12–132 (YDQHCYQAFN…CEQMHAFVCK (121 aa)) form the C-type lectin domain.

It belongs to the snaclec family. As to quaternary structure, dimer (non-covalently linked) of heterodimers of subunits alpha and beta (disulfide-linked). Expressed by the venom gland.

The protein localises to the secreted. In terms of biological role, elicits platelet aggregation by the binding to the C-type lectin domain family 1 member B (CLEC1B/CLEC2). Binding leads to tyrosine phosphorylation in the cytoplasmic tail of CLEC1B, which promotes the binding of spleen tyrosine kinase (Syk), subsequent activation of PLC-gamma-2, and platelet activation and aggregation. Binding to GPIbalpha (GP1BA) and alpha-2/beta-1 (ITGA2/ITGB1) may also induce aggregation, but this is controversial. This chain is Snaclec rhodocytin subunit alpha, found in Calloselasma rhodostoma (Malayan pit viper).